We begin with the raw amino-acid sequence, 425 residues long: Serine--tRNA ligase (425 aa).

Thr-230 to Glu-232 serves as a coordination point for L-serine. ATP is bound at residue Arg-261–Glu-263. L-serine is bound at residue Glu-284. Glu-348–Ser-351 contacts ATP. Ser-384 serves as a coordination point for L-serine.

It belongs to the class-II aminoacyl-tRNA synthetase family. Type-1 seryl-tRNA synthetase subfamily. In terms of assembly, homodimer. The tRNA molecule binds across the dimer.

It is found in the cytoplasm. The catalysed reaction is tRNA(Ser) + L-serine + ATP = L-seryl-tRNA(Ser) + AMP + diphosphate + H(+). It carries out the reaction tRNA(Sec) + L-serine + ATP = L-seryl-tRNA(Sec) + AMP + diphosphate + H(+). It participates in aminoacyl-tRNA biosynthesis; selenocysteinyl-tRNA(Sec) biosynthesis; L-seryl-tRNA(Sec) from L-serine and tRNA(Sec): step 1/1. Functionally, catalyzes the attachment of serine to tRNA(Ser). Is also able to aminoacylate tRNA(Sec) with serine, to form the misacylated tRNA L-seryl-tRNA(Sec), which will be further converted into selenocysteinyl-tRNA(Sec). The polypeptide is Serine--tRNA ligase (Streptococcus pyogenes serotype M1).